The following is a 138-amino-acid chain: Small ribosomal subunit protein uS11c (138 aa).

The disordered stretch occupies residues 1-23; it reads MAKPIPRIGSRRNGRIGSRKSAR. Residues 9 to 23 show a composition bias toward basic residues; sequence GSRRNGRIGSRKSAR.

This sequence belongs to the universal ribosomal protein uS11 family. In terms of assembly, part of the 30S ribosomal subunit.

It localises to the plastid. The protein resides in the chloroplast. The sequence is that of Small ribosomal subunit protein uS11c from Vitis vinifera (Grape).